A 143-amino-acid chain; its full sequence is 3-hydroxyacyl-[acyl-carrier-protein] dehydratase FabZ (143 aa).

Residue H47 is part of the active site.

Belongs to the thioester dehydratase family. FabZ subfamily.

It localises to the cytoplasm. The enzyme catalyses a (3R)-hydroxyacyl-[ACP] = a (2E)-enoyl-[ACP] + H2O. Its function is as follows. Involved in unsaturated fatty acids biosynthesis. Catalyzes the dehydration of short chain beta-hydroxyacyl-ACPs and long chain saturated and unsaturated beta-hydroxyacyl-ACPs. The chain is 3-hydroxyacyl-[acyl-carrier-protein] dehydratase FabZ from Rickettsia canadensis (strain McKiel).